A 271-amino-acid polypeptide reads, in one-letter code: Formamidopyrimidine-DNA glycosylase (271 aa).

P2 acts as the Schiff-base intermediate with DNA in catalysis. The Proton donor role is filled by E3. K57 acts as the Proton donor; for beta-elimination activity in catalysis. Residues H90, R109, and K151 each contribute to the DNA site. The segment at 236 to 270 adopts an FPG-type zinc-finger fold; it reads HVYGRGSKSCTHCGNLLSEIRLGQRTTVFCGLCQT. Catalysis depends on R260, which acts as the Proton donor; for delta-elimination activity.

It belongs to the FPG family. As to quaternary structure, monomer. Zn(2+) is required as a cofactor.

The enzyme catalyses Hydrolysis of DNA containing ring-opened 7-methylguanine residues, releasing 2,6-diamino-4-hydroxy-5-(N-methyl)formamidopyrimidine.. The catalysed reaction is 2'-deoxyribonucleotide-(2'-deoxyribose 5'-phosphate)-2'-deoxyribonucleotide-DNA = a 3'-end 2'-deoxyribonucleotide-(2,3-dehydro-2,3-deoxyribose 5'-phosphate)-DNA + a 5'-end 5'-phospho-2'-deoxyribonucleoside-DNA + H(+). In terms of biological role, involved in base excision repair of DNA damaged by oxidation or by mutagenic agents. Acts as a DNA glycosylase that recognizes and removes damaged bases. Has a preference for oxidized purines, such as 7,8-dihydro-8-oxoguanine (8-oxoG). Has AP (apurinic/apyrimidinic) lyase activity and introduces nicks in the DNA strand. Cleaves the DNA backbone by beta-delta elimination to generate a single-strand break at the site of the removed base with both 3'- and 5'-phosphates. The protein is Formamidopyrimidine-DNA glycosylase of Shewanella denitrificans (strain OS217 / ATCC BAA-1090 / DSM 15013).